The following is a 194-amino-acid chain: Large ribosomal subunit protein bL25B (194 aa).

It belongs to the bacterial ribosomal protein bL25 family. CTC subfamily. In terms of assembly, part of the 50S ribosomal subunit; part of the 5S rRNA/L5/L18/L25 subcomplex. Contacts the 5S rRNA. Binds to the 5S rRNA independently of L5 and L18.

In terms of biological role, this is one of the proteins that binds to the 5S RNA in the ribosome where it forms part of the central protuberance. The polypeptide is Large ribosomal subunit protein bL25B (Symbiobacterium thermophilum (strain DSM 24528 / JCM 14929 / IAM 14863 / T)).